A 325-amino-acid chain; its full sequence is 4-hydroxy-3-methylbut-2-enyl diphosphate reductase (325 aa).

Cys-21 serves as a coordination point for [4Fe-4S] cluster. Residues His-50 and His-83 each coordinate (2E)-4-hydroxy-3-methylbut-2-enyl diphosphate. Dimethylallyl diphosphate contacts are provided by His-50 and His-83. Residues His-50 and His-83 each coordinate isopentenyl diphosphate. Cys-105 is a [4Fe-4S] cluster binding site. His-133 is a (2E)-4-hydroxy-3-methylbut-2-enyl diphosphate binding site. His-133 serves as a coordination point for dimethylallyl diphosphate. An isopentenyl diphosphate-binding site is contributed by His-133. The Proton donor role is filled by Glu-135. Residue Thr-173 coordinates (2E)-4-hydroxy-3-methylbut-2-enyl diphosphate. Cys-203 serves as a coordination point for [4Fe-4S] cluster. (2E)-4-hydroxy-3-methylbut-2-enyl diphosphate-binding residues include Ser-231, Ser-232, Asn-233, and Ser-275. Residues Ser-231, Ser-232, Asn-233, and Ser-275 each coordinate dimethylallyl diphosphate. Isopentenyl diphosphate contacts are provided by Ser-231, Ser-232, Asn-233, and Ser-275.

Belongs to the IspH family. The cofactor is [4Fe-4S] cluster.

It catalyses the reaction isopentenyl diphosphate + 2 oxidized [2Fe-2S]-[ferredoxin] + H2O = (2E)-4-hydroxy-3-methylbut-2-enyl diphosphate + 2 reduced [2Fe-2S]-[ferredoxin] + 2 H(+). The catalysed reaction is dimethylallyl diphosphate + 2 oxidized [2Fe-2S]-[ferredoxin] + H2O = (2E)-4-hydroxy-3-methylbut-2-enyl diphosphate + 2 reduced [2Fe-2S]-[ferredoxin] + 2 H(+). Its pathway is isoprenoid biosynthesis; dimethylallyl diphosphate biosynthesis; dimethylallyl diphosphate from (2E)-4-hydroxy-3-methylbutenyl diphosphate: step 1/1. The protein operates within isoprenoid biosynthesis; isopentenyl diphosphate biosynthesis via DXP pathway; isopentenyl diphosphate from 1-deoxy-D-xylulose 5-phosphate: step 6/6. In terms of biological role, catalyzes the conversion of 1-hydroxy-2-methyl-2-(E)-butenyl 4-diphosphate (HMBPP) into a mixture of isopentenyl diphosphate (IPP) and dimethylallyl diphosphate (DMAPP). Acts in the terminal step of the DOXP/MEP pathway for isoprenoid precursor biosynthesis. The protein is 4-hydroxy-3-methylbut-2-enyl diphosphate reductase of Bordetella pertussis (strain Tohama I / ATCC BAA-589 / NCTC 13251).